The chain runs to 148 residues: Endoribonuclease YbeY (148 aa).

Residues His112, His116, and His122 each coordinate Zn(2+).

The protein belongs to the endoribonuclease YbeY family. Zn(2+) serves as cofactor.

The protein resides in the cytoplasm. Single strand-specific metallo-endoribonuclease involved in late-stage 70S ribosome quality control and in maturation of the 3' terminus of the 16S rRNA. The protein is Endoribonuclease YbeY of Albidiferax ferrireducens (strain ATCC BAA-621 / DSM 15236 / T118) (Rhodoferax ferrireducens).